Consider the following 63-residue polypeptide: Large ribosomal subunit protein uL29 (63 aa).

It belongs to the universal ribosomal protein uL29 family.

The sequence is that of Large ribosomal subunit protein uL29 from Alteromonas mediterranea (strain DSM 17117 / CIP 110805 / LMG 28347 / Deep ecotype).